A 212-amino-acid polypeptide reads, in one-letter code: Large ribosomal subunit protein uL3 (212 aa).

At Q153 the chain carries N5-methylglutamine.

Belongs to the universal ribosomal protein uL3 family. Part of the 50S ribosomal subunit. Forms a cluster with proteins L14 and L19. Post-translationally, methylated by PrmB.

Functionally, one of the primary rRNA binding proteins, it binds directly near the 3'-end of the 23S rRNA, where it nucleates assembly of the 50S subunit. This Dechloromonas aromatica (strain RCB) protein is Large ribosomal subunit protein uL3.